A 355-amino-acid chain; its full sequence is Elongation factor Ts (355 aa).

The segment at 82 to 85 is involved in Mg(2+) ion dislocation from EF-Tu; sequence TDFV.

This sequence belongs to the EF-Ts family.

It is found in the cytoplasm. Its function is as follows. Associates with the EF-Tu.GDP complex and induces the exchange of GDP to GTP. It remains bound to the aminoacyl-tRNA.EF-Tu.GTP complex up to the GTP hydrolysis stage on the ribosome. This Helicobacter pylori (strain Shi470) protein is Elongation factor Ts.